Here is a 745-residue protein sequence, read N- to C-terminus: Copper-transporting ATPase (745 aa).

One can recognise an HMA domain in the interval 1-67 (MKESFYIEGM…LIEKLGYSPK (67 aa)). Residues 1-83 (MKESFYIEGM…KKEFFSPNVK (83 aa)) lie on the Cytoplasmic side of the membrane. Cu cation-binding residues include Cys12 and Cys15. A helical transmembrane segment spans residues 84-104 (LALAVIFTLFVVYLSMGAMLS). The Extracellular portion of the chain corresponds to 105–124 (PSLLPESLLAIDNHSNFLNA). The helical transmembrane segment at 125 to 144 (CLQLIGALIVMHLGRDFYIQ) threads the bilayer. At 145–151 (GFKALWH) the chain is on the cytoplasmic side. The helical transmembrane segment at 152–172 (RQPNMSSLIAIGTSAALISSL) threads the bilayer. Residues 173–194 (WQLYLVYTNHYTDQWSYGHYYF) lie on the Extracellular side of the membrane. A helical membrane pass occupies residues 195–215 (ESVCVILMFVMVGKRIENVSK). Residues 216–343 (DKALDAMQAL…KAEISRLADK (128 aa)) lie on the Cytoplasmic side of the membrane. A helical membrane pass occupies residues 344–366 (VSSVFVPSVIAISILAFVVWLII). Residues 367-379 (APKPDFWWNFGIA) are Extracellular-facing. Residues 380–397 (LEVFVSVLVISCPCALGL) traverse the membrane as a helical segment. Residues 398-685 (ATPMSILVAN…KLSQATIKNI (288 aa)) lie on the Cytoplasmic side of the membrane. The 4-aspartylphosphate intermediate role is filled by Asp435. Mg(2+)-binding residues include Asp631 and Asp635. A helical transmembrane segment spans residues 686-705 (KENLFWAFCYNSVFIPLACG). Residues 706–716 (VLYKANLMLSP) are Extracellular-facing. A helical transmembrane segment spans residues 717–735 (AIAGLAMSLSSVSVVLNSQ). The Cytoplasmic portion of the chain corresponds to 736 to 745 (RLRNFKIKDH).

It belongs to the cation transport ATPase (P-type) (TC 3.A.3) family. Type IB subfamily.

It localises to the cell membrane. It carries out the reaction Cu(2+)(in) + ATP + H2O = Cu(2+)(out) + ADP + phosphate + H(+). Functionally, probably involved in copper export. This Helicobacter pylori (strain ATCC 700392 / 26695) (Campylobacter pylori) protein is Copper-transporting ATPase (copA).